The sequence spans 271 residues: Probable CAAX prenyl protease 2 (271 aa).

The next 2 membrane-spanning stretches (helical) occupy residues 3-23 and 42-62; these read VYLI…TFPV and CISV…IIGP. Residues Glu126 and His160 each act as proton donor/acceptor in the active site. The next 2 membrane-spanning stretches (helical) occupy residues 174 to 194 and 236 to 256; these read AYIA…VFGW and IYYT…GITD.

The protein belongs to the peptidase U48 family.

Its subcellular location is the endoplasmic reticulum membrane. It catalyses the reaction Hydrolyzes the peptide bond -P2-(S-farnesyl or geranylgeranyl)C-P1'-P2'-P3'-COOH where P1' and P2' are amino acids with aliphatic sidechains and P3' is any C-terminal residue.. Its function is as follows. Protease involved in the processing of a variety of prenylated proteins containing the C-terminal CAAX motif, where C is a cysteine modified with an isoprenoid lipid, A is an aliphatic amino acid and X is any C-terminal amino acid. Proteolytically removes the C-terminal three residues of farnesylated proteins, leaving the prenylated cysteine as the new C-terminus. This Schizosaccharomyces pombe (strain 972 / ATCC 24843) (Fission yeast) protein is Probable CAAX prenyl protease 2.